Consider the following 374-residue polypeptide: Chaperone protein DnaJ (374 aa).

One can recognise a J domain in the interval 5–70 (DYYEVLGVER…NKRAAYDQYG (66 aa)). Residues 133–211 (GTSVNIRVPT…CHGEGRVEEY (79 aa)) form a CR-type zinc finger. The Zn(2+) site is built by C146, C149, C163, C166, C185, C188, C199, and C202. 4 CXXCXGXG motif repeats span residues 146-153 (CKPCDGSG), 163-170 (CPTCGGIG), 185-192 (CPRCHGQG), and 199-206 (CDSCHGEG).

Belongs to the DnaJ family. Homodimer. The cofactor is Zn(2+).

It is found in the cytoplasm. Its function is as follows. Participates actively in the response to hyperosmotic and heat shock by preventing the aggregation of stress-denatured proteins and by disaggregating proteins, also in an autonomous, DnaK-independent fashion. Unfolded proteins bind initially to DnaJ; upon interaction with the DnaJ-bound protein, DnaK hydrolyzes its bound ATP, resulting in the formation of a stable complex. GrpE releases ADP from DnaK; ATP binding to DnaK triggers the release of the substrate protein, thus completing the reaction cycle. Several rounds of ATP-dependent interactions between DnaJ, DnaK and GrpE are required for fully efficient folding. Also involved, together with DnaK and GrpE, in the DNA replication of plasmids through activation of initiation proteins. The chain is Chaperone protein DnaJ from Pseudomonas fluorescens (strain SBW25).